We begin with the raw amino-acid sequence, 358 residues long: Phosphoribosylformylglycinamidine cyclo-ligase (358 aa).

Belongs to the AIR synthase family.

It localises to the cytoplasm. It carries out the reaction 2-formamido-N(1)-(5-O-phospho-beta-D-ribosyl)acetamidine + ATP = 5-amino-1-(5-phospho-beta-D-ribosyl)imidazole + ADP + phosphate + H(+). It participates in purine metabolism; IMP biosynthesis via de novo pathway; 5-amino-1-(5-phospho-D-ribosyl)imidazole from N(2)-formyl-N(1)-(5-phospho-D-ribosyl)glycinamide: step 2/2. This chain is Phosphoribosylformylglycinamidine cyclo-ligase, found in Nitrosococcus oceani (strain ATCC 19707 / BCRC 17464 / JCM 30415 / NCIMB 11848 / C-107).